A 515-amino-acid chain; its full sequence is Na(+)/H(+) antiporter NhaB (515 aa).

A run of 11 helical transmembrane segments spans residues 23–43 (LAII…NPFV), 45–65 (GWLL…CYPL), 96–116 (VVLL…LLLF), 136–156 (CLAS…AVVI), 204–224 (LMMH…VGEP), 245–265 (APIT…VEHF), 305–325 (ALIG…VGLI), 349–369 (FEEA…VAVI), 393–413 (LFYL…VGTV), 449–469 (ATPN…SPLI), and 480–500 (ALPY…FLLI).

It belongs to the NhaB Na(+)/H(+) (TC 2.A.34) antiporter family.

It localises to the cell inner membrane. It catalyses the reaction 2 Na(+)(in) + 3 H(+)(out) = 2 Na(+)(out) + 3 H(+)(in). Its function is as follows. Na(+)/H(+) antiporter that extrudes sodium in exchange for external protons. This chain is Na(+)/H(+) antiporter NhaB, found in Photorhabdus laumondii subsp. laumondii (strain DSM 15139 / CIP 105565 / TT01) (Photorhabdus luminescens subsp. laumondii).